We begin with the raw amino-acid sequence, 341 residues long: tRNA N6-adenosine threonylcarbamoyltransferase (341 aa).

Fe cation contacts are provided by histidine 111 and histidine 115. Residues 134-138 (LVSGG), aspartate 167, glycine 180, and asparagine 276 each bind substrate. Residue aspartate 304 participates in Fe cation binding.

The protein belongs to the KAE1 / TsaD family. Requires Fe(2+) as cofactor.

The protein localises to the cytoplasm. The catalysed reaction is L-threonylcarbamoyladenylate + adenosine(37) in tRNA = N(6)-L-threonylcarbamoyladenosine(37) in tRNA + AMP + H(+). Functionally, required for the formation of a threonylcarbamoyl group on adenosine at position 37 (t(6)A37) in tRNAs that read codons beginning with adenine. Is involved in the transfer of the threonylcarbamoyl moiety of threonylcarbamoyl-AMP (TC-AMP) to the N6 group of A37, together with TsaE and TsaB. TsaD likely plays a direct catalytic role in this reaction. This is tRNA N6-adenosine threonylcarbamoyltransferase from Stutzerimonas stutzeri (strain A1501) (Pseudomonas stutzeri).